We begin with the raw amino-acid sequence, 116 residues long: Probable transcriptional regulator WhiB6 (116 aa).

The [4Fe-4S] cluster site is built by cysteine 12, cysteine 53, cysteine 56, and cysteine 62. The 4Fe-4S Wbl-type domain maps to 33–86; the sequence is VCTQDPDRWTTTPDDEAKTLCRACPRRWLCARDAVESAGAEGLWAGVVIPESGR.

Belongs to the WhiB family. [4Fe-4S] cluster is required as a cofactor. In terms of processing, the Fe-S cluster can be nitrosylated by nitric oxide (NO). Upon Fe-S cluster removal intramolecular disulfide bonds are formed.

The protein resides in the cytoplasm. Functionally, acts as a transcriptional regulator. Probably redox-responsive. The apo- but not holo-form probably binds DNA. The polypeptide is Probable transcriptional regulator WhiB6 (whiB6) (Mycobacterium tuberculosis (strain CDC 1551 / Oshkosh)).